We begin with the raw amino-acid sequence, 346 residues long: Ferredoxin--NADP reductase (346 aa).

FAD-binding residues include E35, Q43, Y48, V88, F122, D287, and T327.

This sequence belongs to the ferredoxin--NADP reductase type 2 family. In terms of assembly, homodimer. Requires FAD as cofactor.

It carries out the reaction 2 reduced [2Fe-2S]-[ferredoxin] + NADP(+) + H(+) = 2 oxidized [2Fe-2S]-[ferredoxin] + NADPH. This chain is Ferredoxin--NADP reductase, found in Oenococcus oeni (strain ATCC BAA-331 / PSU-1).